A 190-amino-acid chain; its full sequence is Scytalone dehydratase-like protein Arp1 (190 aa).

Tyrosine 67 serves as a coordination point for substrate. Active-site residues include histidine 102 and histidine 127. Asparagine 148 contacts substrate.

It belongs to the scytalone dehydratase family. As to quaternary structure, homotrimer. Each subunit contains an active site, located in the central part of the hydrophobic core of the monomer, which functions independently.

Its function is as follows. Scytalone dehydratase-like protein; part of the Pks2 gene cluster that mediates the formation of infectious structures (appressoria), enabling these fungi to kill insects faster. The product of the Pks2 gene cluster is different from the one of Pks1 and has still not been identified. The chain is Scytalone dehydratase-like protein Arp1 from Metarhizium anisopliae (strain ARSEF 549).